A 446-amino-acid chain; its full sequence is Cyclin-F2-2 (446 aa).

A disordered region spans residues 191-216; it reads YNGDNDAPAPDNSTASRPQLCAPYDD.

It belongs to the cyclin family. Cyclin F subfamily.

This chain is Cyclin-F2-2 (CYCF2-2), found in Oryza sativa subsp. japonica (Rice).